The sequence spans 320 residues: Methionyl-tRNA formyltransferase (320 aa).

117–120 (SLLP) is a (6S)-5,6,7,8-tetrahydrofolate binding site.

It belongs to the Fmt family.

The enzyme catalyses L-methionyl-tRNA(fMet) + (6R)-10-formyltetrahydrofolate = N-formyl-L-methionyl-tRNA(fMet) + (6S)-5,6,7,8-tetrahydrofolate + H(+). Functionally, attaches a formyl group to the free amino group of methionyl-tRNA(fMet). The formyl group appears to play a dual role in the initiator identity of N-formylmethionyl-tRNA by promoting its recognition by IF2 and preventing the misappropriation of this tRNA by the elongation apparatus. This is Methionyl-tRNA formyltransferase from Bordetella petrii (strain ATCC BAA-461 / DSM 12804 / CCUG 43448).